Reading from the N-terminus, the 351-residue chain is Phenylalanine--tRNA ligase alpha subunit (351 aa).

Glu266 lines the Mg(2+) pocket.

It belongs to the class-II aminoacyl-tRNA synthetase family. Phe-tRNA synthetase alpha subunit type 1 subfamily. In terms of assembly, tetramer of two alpha and two beta subunits. Requires Mg(2+) as cofactor.

The protein localises to the cytoplasm. It catalyses the reaction tRNA(Phe) + L-phenylalanine + ATP = L-phenylalanyl-tRNA(Phe) + AMP + diphosphate + H(+). The polypeptide is Phenylalanine--tRNA ligase alpha subunit (Anaplasma marginale (strain St. Maries)).